The following is a 351-amino-acid chain: Fe(3+) ions import ATP-binding protein FbpC (351 aa).

The 231-residue stretch at 7–237 (VELKNVTKRF…PASEFMASFM (231 aa)) folds into the ABC transporter domain. 39 to 46 (GPSGCGKT) lines the ATP pocket.

It belongs to the ABC transporter superfamily. Fe(3+) ion importer (TC 3.A.1.10) family. As to quaternary structure, the complex is composed of two ATP-binding proteins (FbpC), two transmembrane proteins (FbpB) and a solute-binding protein (FbpA).

It localises to the cell inner membrane. It carries out the reaction Fe(3+)(out) + ATP + H2O = Fe(3+)(in) + ADP + phosphate + H(+). Part of the ABC transporter complex FbpABC involved in Fe(3+) ions import. Responsible for energy coupling to the transport system. The polypeptide is Fe(3+) ions import ATP-binding protein FbpC (Photorhabdus laumondii subsp. laumondii (strain DSM 15139 / CIP 105565 / TT01) (Photorhabdus luminescens subsp. laumondii)).